A 194-amino-acid chain; its full sequence is Chitin synthase 2 (194 aa).

Belongs to the chitin synthase family. Class III subfamily.

It localises to the cell membrane. The enzyme catalyses [(1-&gt;4)-N-acetyl-beta-D-glucosaminyl](n) + UDP-N-acetyl-alpha-D-glucosamine = [(1-&gt;4)-N-acetyl-beta-D-glucosaminyl](n+1) + UDP + H(+). In terms of biological role, polymerizes chitin, a structural polymer of the cell wall and septum, by transferring the sugar moiety of UDP-GlcNAc to the non-reducing end of the growing chitin polymer. This is Chitin synthase 2 (CHS2) from Ajellomyces capsulatus (Darling's disease fungus).